Reading from the N-terminus, the 45-residue chain is Metallothionein-like protein 1A (45 aa).

The protein belongs to the metallothionein superfamily. Type 15 family. Expressed in phloem and mesophyll cells of leaves, vascular tissues of cotyledons, sepals and petals. Expressed in anthers. Expressed in root endodermis and at lower levels in cortex of mature region of roots.

Metallothioneins have a high content of cysteine residues that bind various heavy metals. Functions as a metal chelator of copper (Cu) and zinc (Zn). Plays a role in Cu homeostasis in the roots under elevated Cu concentration. Functions cooperatively with the phytochelatin synthase PCS1 to protect plants from Cu and cadmium (Cd) toxicity. Plays a role in Cu homeostasis, specifically in the remobilization of Cu from senescing leaves. The mobilization of Cu from internal sources is important for seed development. Confers tolerance to Cd and plays a role in Cd and Zn homeostasis. This chain is Metallothionein-like protein 1A (MT1A), found in Arabidopsis thaliana (Mouse-ear cress).